A 567-amino-acid polypeptide reads, in one-letter code: uncharacterized protein (567 aa).

The next 6 membrane-spanning stretches (helical) occupy residues 20–40, 69–89, 95–115, 126–146, 168–188, and 528–548; these read FTIL…SGVL, SLET…SVFI, AYLT…VALI, ILLN…FMCL, IPLV…YLLF, and IFGS…LLAI.

Its subcellular location is the cell membrane. This is an uncharacterized protein from Escherichia coli (strain K12).